A 180-amino-acid chain; its full sequence is Nucleoside triphosphate/diphosphate phosphatase (180 aa).

Arginine 26 acts as the Proton donor in catalysis. Mg(2+) contacts are provided by asparagine 90, aspartate 106, aspartate 108, aspartate 110, aspartate 123, and glutamate 126.

This sequence belongs to the Ntdp family. Requires Mg(2+) as cofactor.

It catalyses the reaction a ribonucleoside 5'-triphosphate + H2O = a ribonucleoside 5'-diphosphate + phosphate + H(+). It carries out the reaction a ribonucleoside 5'-diphosphate + H2O = a ribonucleoside 5'-phosphate + phosphate + H(+). In terms of biological role, has nucleoside phosphatase activity towards nucleoside triphosphates and nucleoside diphosphates. The sequence is that of Nucleoside triphosphate/diphosphate phosphatase from Staphylococcus aureus (strain Mu3 / ATCC 700698).